Consider the following 91-residue polypeptide: Putative defensin-like protein 83 (91 aa).

A signal peptide spans 1–27 (MATNKFLSILLLSLMAFAAILLPMISG). Intrachain disulfides connect Cys-32–Cys-71, Cys-37–Cys-57, Cys-43–Cys-69, and Cys-47–Cys-70.

Belongs to the DEFL family.

The protein resides in the secreted. This Arabidopsis thaliana (Mouse-ear cress) protein is Putative defensin-like protein 83 (LCR46).